A 21-amino-acid polypeptide reads, in one-letter code: GSKKPVPIIYCNRRTGKCQRM.

The cysteines at positions 11 and 18 are disulfide-linked.

The protein resides in the secreted. Its function is as follows. Insect defense peptide with a broad spectrum of activity against Gram-positive and Gram-negative bacteria and fungi. No activity against S.aureus. Stops respiration in bacteria but does not permeabilize their inner membranes. The polypeptide is Thanatin (Podisus maculiventris (Spined soldier bug)).